The sequence spans 121 residues: ATP synthase epsilon chain (121 aa).

It belongs to the ATPase epsilon chain family. In terms of assembly, F-type ATPases have 2 components, CF(1) - the catalytic core - and CF(0) - the membrane proton channel. CF(1) has five subunits: alpha(3), beta(3), gamma(1), delta(1), epsilon(1). CF(0) has three main subunits: a, b and c.

The protein localises to the cell membrane. Functionally, produces ATP from ADP in the presence of a proton gradient across the membrane. The sequence is that of ATP synthase epsilon chain from Mycolicibacterium vanbaalenii (strain DSM 7251 / JCM 13017 / BCRC 16820 / KCTC 9966 / NRRL B-24157 / PYR-1) (Mycobacterium vanbaalenii).